The chain runs to 74 residues: CLAVATA3/ESR (CLE)-related protein 19 (74 aa).

The signal sequence occupies residues methionine 1 to serine 24. N-linked (GlcNAc...) asparagine glycosylation is found at asparagine 34 and asparagine 54. Hydroxyproline is present on residues proline 65 and proline 68. Proline 68 carries an O-linked (Ara...) hydroxyproline glycan.

The protein belongs to the CLV3/ESR signal peptide family. Post-translationally, the O-glycosylation (arabinosylation) of the hydroxyproline Pro-68 enhances binding affinity of the CLE19p peptide for its receptor. Mostly expressed in heart-shape embryos, pollen and young flower buds, and, to a lower extent, in inflorescence, leaves and roots.

It is found in the secreted. The protein localises to the extracellular space. In terms of biological role, extracellular signal peptide that regulates cell fate. Represses root apical meristem maintenance. The polypeptide is CLAVATA3/ESR (CLE)-related protein 19 (Arabidopsis thaliana (Mouse-ear cress)).